The following is a 286-amino-acid chain: Plasma membrane ascorbate-dependent reductase CYBRD1 (286 aa).

Residues 1 to 7 are Cytoplasmic-facing; that stretch reads MAMEGYR. A helical membrane pass occupies residues 8–32; that stretch reads GFLGLLVSALLVGFLSVIFVLIWVL. A Cytochrome b561 domain is found at 15 to 220; it reads SALLVGFLSV…FGALIFWIVT (206 aa). Over 33–47 the chain is Extracellular; that stretch reads HFREGLGWDGGALEF. A helical transmembrane segment spans residues 48 to 69; sequence NWHPVLAVTGFVFIQGIAIIVY. His50, Arg70, and Lys79 together coordinate heme b. The Cytoplasmic portion of the chain corresponds to 70–78; the sequence is RLPWTWKCS. Residues Lys79 and Lys83 each contribute to the L-ascorbate site. Residues 79–105 form a helical membrane-spanning segment; the sequence is KFLMKSIHAGLNAVAAILAIISVVAVF. His86 lines the heme b pocket. Residues 106–118 lie on the Extracellular side of the membrane; that stretch reads DYHNVRKIPHMYS. His108 lines the Fe(3+) pocket. Residues 115-118 and His120 contribute to the heme b site; that span reads HMYS. The helical transmembrane segment at 119–144 threads the bilayer; it reads LHSWVGLTVLILYIQQLVVGFFIFLL. The Cytoplasmic portion of the chain corresponds to 145–151; that stretch reads PWAPPSL. L-ascorbate is bound at residue Arg152. Residues 152 to 179 traverse the membrane as a helical segment; it reads RAIVMPIHVYSGLLLFGTVIATVLMGVT. The heme b site is built by His159 and Glu180. Over 180 to 197 the chain is Extracellular; it reads EKLFFVLKNPSYHSFPPE. Residues 198–222 traverse the membrane as a helical segment; the sequence is GVFTNTLGLLILVFGALIFWIVTRP. Residues 223 to 286 lie on the Cytoplasmic side of the membrane; sequence QWKRPREPGS…LVDTGQRSTM (64 aa). Lys225 serves as a coordination point for heme b. Ser232 carries the post-translational modification Phosphoserine. Thr285 carries the post-translational modification Phosphothreonine.

Homodimer. Requires heme b as cofactor. As to expression, highly expressed in all regions of the small intestine and colon studied in suckling animals. However, after weaning, when iron absorption declines significantly, strong expression is retained only in the duodenum. Also expressed in respiratory epithelium.

Its subcellular location is the cell membrane. It is found in the apical cell membrane. The catalysed reaction is Fe(3+)(out) + L-ascorbate(in) = monodehydro-L-ascorbate radical(in) + Fe(2+)(out) + H(+). It carries out the reaction Cu(2+)(out) + L-ascorbate(in) = Cu(+)(out) + monodehydro-L-ascorbate radical(in) + H(+). It catalyses the reaction monodehydro-L-ascorbate radical(out) + L-ascorbate(in) = monodehydro-L-ascorbate radical(in) + L-ascorbate(out). Plasma membrane reductase that uses cytoplasmic ascorbate as an electron donor to reduce extracellular Fe(3+) into Fe(2+). Probably functions in dietary iron absorption at the brush border of duodenal enterocytes by producing Fe(2+), the divalent form of iron that can be transported into enterocytes. It is also able to reduce extracellular monodehydro-L-ascorbate and may be involved in extracellular ascorbate regeneration by erythrocytes in blood. May also act as a ferrireductase in airway epithelial cells. May also function as a cupric transmembrane reductase. This chain is Plasma membrane ascorbate-dependent reductase CYBRD1, found in Rattus norvegicus (Rat).